Reading from the N-terminus, the 547-residue chain is Solute carrier family 22 member 7 (547 aa).

The chain crosses the membrane as a helical span at residues 21–41 (VALLALPRVLLPMHFLLPIFL). Positions 91-103 (NSTLWGEGQNSGE) are enriched in polar residues. A disordered region spans residues 91 to 112 (NSTLWGEGQNSGEQPEGEPSTV). Helical transmembrane passes span 145–165 (AIST…GYLS), 179–199 (VSSL…MFAI), 203–223 (LTGM…LEWL), 233–253 (VLSS…GYLI), 258–278 (WLLL…WWVP), 345–365 (ISLC…GVSL), 367–387 (LSGL…VELP), 403–423 (LTMA…ILVS), 431–451 (TALA…AYLF), 465–485 (MGLT…AALL), and 492–512 (LPKL…LLLP). The segment at 521–547 (ETIQDVERKSAPSSLQEEEMPMKQVQD) is disordered.

It belongs to the major facilitator (TC 2.A.1) superfamily. Organic cation transporter (TC 2.A.1.19) family.

The protein localises to the basolateral cell membrane. The protein resides in the apical cell membrane. Its subcellular location is the cell membrane. The catalysed reaction is orotate(out) + L-glutamate(in) = orotate(in) + L-glutamate(out). It carries out the reaction 3',5'-cyclic GMP(in) = 3',5'-cyclic GMP(out). It catalyses the reaction GMP(in) = GMP(out). The enzyme catalyses 2'-deoxyguanosine(in) = 2'-deoxyguanosine(out). The catalysed reaction is GDP(in) = GDP(out). It carries out the reaction guanosine(in) = guanosine(out). It catalyses the reaction GTP(in) = GTP(out). The enzyme catalyses 3',5'-cyclic AMP(in) = 3',5'-cyclic AMP(out). The catalysed reaction is creatinine(in) = creatinine(out). It carries out the reaction prostaglandin E2(out) = prostaglandin E2(in). It catalyses the reaction 2-oxoglutarate(in) = 2-oxoglutarate(out). The enzyme catalyses glutarate(in) = glutarate(out). The catalysed reaction is urate(out) = urate(in). It carries out the reaction estrone 3-sulfate(out) = estrone 3-sulfate(in). Functionally, functions as a Na(+)-independent bidirectional multispecific transporter. Contributes to the renal and hepatic elimination of endogenous organic compounds from the systemic circulation into the urine and bile, respectively. Capable of transporting a wide range of purine and pyrimidine nucleobases, nucleosides and nucleotides, with cGMP, 2'deoxyguanosine and GMP being the preferred substrates. Functions as a pH- and chloride-independent cGMP bidirectional facilitative transporter that can regulate both intracellular and extracellular levels of cGMP and may be involved in cGMP signaling pathways. Mediates orotate/glutamate bidirectional exchange and most likely display a physiological role in hepatic release of glutamate into the blood. Involved in renal secretion and possible reabsorption of creatinine. Able to uptake prostaglandin E2 (PGE2) and may contribute to PGE2 renal excretion. Also transports alpha-ketoglutarate and urate. Apart from the orotate/glutamate exchange, the counterions for the uptake of other SLC22A7/OAT2 substrates remain to be identified. The protein is Solute carrier family 22 member 7 (SLC22A7) of Bos taurus (Bovine).